The sequence spans 180 residues: uncharacterized protein (180 aa).

Positions L35 to L163 constitute a Nudix hydrolase domain. Positions G72–G94 match the Nudix box motif. 2 residues coordinate Mg(2+): E88 and E92.

The protein belongs to the Nudix hydrolase family. Mg(2+) is required as a cofactor.

This is an uncharacterized protein from Shigella flexneri.